The following is a 953-amino-acid chain: Coatomer subunit beta (953 aa).

Thr2 carries the post-translational modification N-acetylthreonine. HEAT repeat units follow at residues 96-131 (HEMILVCDAYRKDLQHPNEFIRGSTLRFLCKLKEAE), 132-168 (LLEPLMPAIRACLEHRHSYVRRNAVLAIYTIYRNFEH), 240-276 (SERARFIRCIYNLLQSSSPAVKYEAAGTLVTLSSAPT), 277-314 (AIKAAAQCYIDLIIKESDNNVKLIVLDRLIELKEHPAH), 316-353 (RVLQDLVMDILRVLSTPDLEVRKKTLQLALDLVSSRNV), and 396-433 (DMAANVIPVLMEFLSDSNEAAAADVLEFVREAIQRFDN). N6-acetyllysine is present on Lys494.

In terms of assembly, oligomeric complex that consists of at least the alpha, beta, beta', gamma, delta, epsilon and zeta subunits. Interacts with ARF1 (myristoylated); this interaction is required for binding of COPB1 to Golgi membranes. Interacts with CAPN8 and PRKCE. Interacts with SCYL1. Interacts with COPG1. Interacts (via trunk domain) with ARF1 (via switch I region); the interaction is direct. Interacts with KCNK2 (via N-terminus); this interaction increases the channel-mediated whole cell currents and promotes plasma membrane expression of KCNK2. Interacts with STX17. Interacts with TMEM115. Interacts with TMEM41B. In terms of processing, proteolytically cleaved between Ser-528 and Ser-529 by CAPN8.

Its subcellular location is the cytoplasm. It localises to the cytosol. The protein resides in the golgi apparatus membrane. The protein localises to the cytoplasmic vesicle. It is found in the COPI-coated vesicle membrane. Its subcellular location is the cell membrane. It localises to the endoplasmic reticulum-Golgi intermediate compartment. Functionally, the coatomer is a cytosolic protein complex that binds to dilysine motifs and reversibly associates with Golgi non-clathrin-coated vesicles, which further mediate biosynthetic protein transport from the ER, via the Golgi up to the trans Golgi network. Coatomer complex is required for budding from Golgi membranes, and is essential for the retrograde Golgi-to-ER transport of dilysine-tagged proteins. In mammals, the coatomer can only be recruited by membranes associated to ADP-ribosylation factors (ARFs), which are small GTP-binding proteins; the complex also influences the Golgi structural integrity, as well as the processing, activity, and endocytic recycling of LDL receptors. Involved in the Golgi disassembly and reassembly processes during cell cycle. Plays a functional role in facilitating the transport of kappa-type opioid receptor mRNAs into axons and enhances translation of these proteins. Required for limiting lipid storage in lipid droplets. Involved in lipid homeostasis by regulating the presence of perilipin family members PLIN2 and PLIN3 at the lipid droplet surface and promoting the association of adipocyte surface triglyceride lipase (PNPLA2) with the lipid droplet to mediate lipolysis. Involved in autophagy by playing a role in early endosome function. Plays a role in organellar compartmentalization of secretory compartments including endoplasmic reticulum (ER)-Golgi intermediate compartment (ERGIC), Golgi, trans-Golgi network (TGN) and recycling endosomes, and in biosynthetic transport of CAV1. In Bos taurus (Bovine), this protein is Coatomer subunit beta (COPB1).